Reading from the N-terminus, the 79-residue chain is Acyl carrier protein (79 aa).

The Carrier domain occupies 2–77 (SDIADKVKKI…DAIDYIEKQK (76 aa)). Residue S37 is modified to O-(pantetheine 4'-phosphoryl)serine.

The protein belongs to the acyl carrier protein (ACP) family. 4'-phosphopantetheine is transferred from CoA to a specific serine of apo-ACP by AcpS. This modification is essential for activity because fatty acids are bound in thioester linkage to the sulfhydryl of the prosthetic group.

Its subcellular location is the cytoplasm. Its pathway is lipid metabolism; fatty acid biosynthesis. Carrier of the growing fatty acid chain in fatty acid biosynthesis. This chain is Acyl carrier protein, found in Gluconobacter oxydans (strain 621H) (Gluconobacter suboxydans).